Reading from the N-terminus, the 652-residue chain is Putative ankyrin repeat protein R734 (652 aa).

ANK repeat units follow at residues T77 to S105, E106 to E136, T138 to Y167, N192 to E219, F220 to D242, I243 to Q274, I307 to R337, S396 to Y430, P468 to S498, and T535 to L564.

In Acanthamoeba polyphaga mimivirus (APMV), this protein is Putative ankyrin repeat protein R734.